Consider the following 23-residue polypeptide: Magainin-BM2 (23 aa).

As to expression, expressed by the skin glands.

Its subcellular location is the secreted. In terms of biological role, antimicrobial peptide. The polypeptide is Magainin-BM2 (Xenopus boumbaensis (Mawa clawed frog)).